Here is a 109-residue protein sequence, read N- to C-terminus: Period circadian protein (109 aa).

Positions 29–100 (ITAPVDVDPH…TGTSSGSVQL (72 aa)) are disordered. Low complexity predominate over residues 69-97 (SGNFNSGSNLHIGSITNTSNTGTGTSSGS).

As to quaternary structure, forms a heterodimer with timeless (TIM); the complex then translocates into the nucleus. Phosphorylated with a circadian rhythmicity, probably by the double-time protein (dbt). Phosphorylation could be implicated in the stability of per monomer and in the formation of heterodimer per-tim.

The protein localises to the nucleus. It is found in the cytoplasm. Its subcellular location is the perinuclear region. Its function is as follows. Essential for biological clock functions. Determines the period length of circadian and ultradian rhythms; an increase in PER dosage leads to shortened circadian rhythms and a decrease leads to lengthened circadian rhythms. Essential for the circadian rhythmicity of locomotor activity, eclosion behavior, and for the rhythmic component of the male courtship song that originates in the thoracic nervous system. The biological cycle depends on the rhythmic formation and nuclear localization of the TIM-PER complex. Light induces the degradation of TIM, which promotes elimination of PER. Nuclear activity of the heterodimer coordinatively regulates PER and TIM transcription through a negative feedback loop. Behaves as a negative element in circadian transcriptional loop. Does not appear to bind DNA, suggesting indirect transcriptional inhibition. The chain is Period circadian protein (per) from Loxocera albiseta (Rust fly).